Reading from the N-terminus, the 587-residue chain is Bifunctional lycopene cyclase/phytoene synthase (587 aa).

Positions methionine 1–tyrosine 236 are lycopene beta-cyclase. Transmembrane regions (helical) follow at residues tyrosine 5 to tryptophan 25, lysine 35 to valine 55, asparagine 65 to isoleucine 85, serine 91 to alanine 111, leucine 116 to glycine 136, isoleucine 145 to isoleucine 165, and leucine 218 to isoleucine 238. A phytoene synthase region spans residues cysteine 243–lysine 587.

This sequence in the N-terminal section; belongs to the lycopene beta-cyclase family. It in the C-terminal section; belongs to the phytoene/squalene synthase family.

It is found in the membrane. It carries out the reaction all-trans-lycopene = gamma-carotene. The catalysed reaction is gamma-carotene = all-trans-beta-carotene. The enzyme catalyses 2 (2E,6E,10E)-geranylgeranyl diphosphate = 15-cis-phytoene + 2 diphosphate. Its pathway is carotenoid biosynthesis; beta-carotene biosynthesis. It participates in carotenoid biosynthesis; phytoene biosynthesis; all-trans-phytoene from geranylgeranyl diphosphate: step 1/1. In terms of biological role, bifunctional enzyme that catalyzes the reactions from geranylgeranyl diphosphate to phytoene (phytoene synthase) and lycopene to beta-carotene via the intermediate gamma-carotene (lycopene cyclase). This chain is Bifunctional lycopene cyclase/phytoene synthase, found in Aspergillus oryzae (strain ATCC 42149 / RIB 40) (Yellow koji mold).